Here is a 246-residue protein sequence, read N- to C-terminus: Putative L,D-transpeptidase YafK (246 aa).

The N-terminal stretch at 1-19 (MRKIALILAMLLIPCVSFA) is a signal peptide. A L,D-TPase catalytic domain is found at 44–174 (VYIQIFKEER…GQPSVQVSIY (131 aa)). Histidine 135 acts as the Proton donor/acceptor in catalysis. Catalysis depends on cysteine 143, which acts as the Nucleophile.

The protein belongs to the YkuD family.

It functions in the pathway cell wall biogenesis; peptidoglycan biosynthesis. The sequence is that of Putative L,D-transpeptidase YafK (yafK) from Escherichia coli O157:H7.